The following is a 189-amino-acid chain: HTH-type transcriptional regulator Hpr (189 aa).

An HTH marR-type domain is found at 12-156 (ALLYSHKIVQ…ISAIVRRLYG (145 aa)). Positions 62-85 (ISEIAKYGVMHVSTAFNFSKKLED) form a DNA-binding region, H-T-H motif.

As to quaternary structure, homodimer.

Functionally, negative regulator of protease production and sporulation. In Exiguobacterium sibiricum (strain DSM 17290 / CCUG 55495 / CIP 109462 / JCM 13490 / 255-15), this protein is HTH-type transcriptional regulator Hpr.